Here is a 253-residue protein sequence, read N- to C-terminus: Transmembrane protein 69 (253 aa).

The next 5 membrane-spanning stretches (helical) occupy residues 104–124 (ALYL…LMNV), 137–157 (VAYG…FAIP), 165–185 (DWMN…ALLF), 192–212 (AAVL…ALLP), and 223–243 (AILT…SSVY).

It localises to the membrane. The polypeptide is Transmembrane protein 69 (tmem69) (Xenopus tropicalis (Western clawed frog)).